The primary structure comprises 439 residues: GTPase Obg (439 aa).

The 159-residue stretch at 4–162 folds into the Obg domain; the sequence is IEFIDVVDIY…KHIQLELKLL (159 aa). The OBG-type G domain maps to 163 to 336; the sequence is ADVGLIGYPN…LKYAMWDIIK (174 aa). Residues 169 to 176, 194 to 198, 218 to 221, 288 to 291, and 317 to 319 each bind GTP; these read GYPNVGKS, FTTLV, DIPG, NKSD, and SAV. Mg(2+) contacts are provided by Ser176 and Thr196. Residues 361-439 enclose the OCT domain; that stretch reads LVLPDRVDIK…VEGVDFIFKE (79 aa).

It belongs to the TRAFAC class OBG-HflX-like GTPase superfamily. OBG GTPase family. Monomer. The cofactor is Mg(2+).

It is found in the cytoplasm. Functionally, an essential GTPase which binds GTP, GDP and possibly (p)ppGpp with moderate affinity, with high nucleotide exchange rates and a fairly low GTP hydrolysis rate. Plays a role in control of the cell cycle, stress response, ribosome biogenesis and in those bacteria that undergo differentiation, in morphogenesis control. The sequence is that of GTPase Obg from Fervidobacterium nodosum (strain ATCC 35602 / DSM 5306 / Rt17-B1).